We begin with the raw amino-acid sequence, 83 residues long: Carboxysome shell vertex protein CsoS4A (83 aa).

Positions 1 to 78 (MKIMQVEKTL…SDLTIIGIID (78 aa)) constitute a BMV domain.

It belongs to the CcmL/EutN family. CsoS4 subfamily. Homopentamer.

It is found in the carboxysome. Probably forms vertices in the carboxysome, a polyhedral inclusion where RuBisCO (ribulose bisphosphate carboxylase, cbbL-cbbS) is sequestered. Has been modeled to induce curvature upon insertion into an otherwise flat hexagonal layer of major carboxysome subunits. A minor shell protein, only 12 pentamers of CsoS4A/CsoS4B are calculated to be present in each carboxysome. The 2 CsoS4 proteins contribute to the impermeability of the carboxysome to CO(2). Its function is as follows. Unlike beta-carboxysomes, alpha-carboxysomes (Cb) can form without cargo protein. CsoS2 is essential for Cb formation and is also capable of targeting foreign proteins to the Cb. The Cb shell assembles with the aid of CsoS2; CsoS1A, CsoS1B and CsoS1C form the majority of the shell while CsoS4A and CsoS4B form vertices. CsoS1D forms pseudohexamers that probably control metabolite flux into and out of the shell. The polypeptide is Carboxysome shell vertex protein CsoS4A (Halothiobacillus neapolitanus (strain ATCC 23641 / c2) (Thiobacillus neapolitanus)).